A 75-amino-acid polypeptide reads, in one-letter code: uncharacterized protein (75 aa).

The dksA C4-type zinc finger occupies 43 to 67 (CSECGLPIPTTRLRANPFAHRCVSC).

This is an uncharacterized protein from Haemophilus influenzae (strain ATCC 51907 / DSM 11121 / KW20 / Rd).